Reading from the N-terminus, the 212-residue chain is Large ribosomal subunit protein uL3 (212 aa).

Gln153 is subject to N5-methylglutamine.

The protein belongs to the universal ribosomal protein uL3 family. As to quaternary structure, part of the 50S ribosomal subunit. Forms a cluster with proteins L14 and L19. In terms of processing, methylated by PrmB.

In terms of biological role, one of the primary rRNA binding proteins, it binds directly near the 3'-end of the 23S rRNA, where it nucleates assembly of the 50S subunit. The polypeptide is Large ribosomal subunit protein uL3 (Shewanella frigidimarina (strain NCIMB 400)).